The sequence spans 402 residues: Multidrug resistance protein MdtH (402 aa).

Over 1-12 the chain is Cytoplasmic; the sequence is MSRVSQARNLGK. A helical transmembrane segment spans residues 13 to 33; the sequence is YFLLIDNMLVVLGFFVVFPLI. Residues 34–98 lie on the Periplasmic side of the membrane; it reads SIRFVDQMGW…GFATMGIAHE (65 aa). A helical membrane pass occupies residues 99 to 116; sequence PWLLWFSCLLSGLGGTLF. Over 117–138 the chain is Cytoplasmic; it reads DPPRSALVVKLIRPQQRGRFFS. The helical transmembrane segment at 139–159 threads the bilayer; sequence LLMMQDSAGAVIGALLGSWLL. At 160 to 164 the chain is on the periplasmic side; that stretch reads QYDFR. The helical transmembrane segment at 165 to 185 threads the bilayer; that stretch reads LVCATGAVLFVLCAAFNAWLL. The Cytoplasmic segment spans residues 186-213; it reads PAWKLSTVRTPVREGMTRVMRDKRFVTY. Residues 214–234 traverse the membrane as a helical segment; it reads VLTLAGYYMLAVQVMLMLPIM. The Periplasmic portion of the chain corresponds to 235-243; it reads VNDVAGAPS. Residues 244–264 form a helical membrane-spanning segment; that stretch reads AVKWMYAIEACLSLTLLYPIA. Over 265–276 the chain is Cytoplasmic; sequence RWSEKHFRLEHR. Residues 277 to 297 traverse the membrane as a helical segment; the sequence is LMAGLLIMSLSMMPVGMVSGL. Over 298–299 the chain is Periplasmic; that stretch reads QQ. A helical transmembrane segment spans residues 300–320; that stretch reads LFTLICLFYIGSIIAEPARET. Over 321-339 the chain is Cytoplasmic; that stretch reads LSASLADARARGSYMGFSR. Residues 340–360 traverse the membrane as a helical segment; it reads LGLAIGGAIGYIGGGWLFDLG. Residues 361-367 are Periplasmic-facing; that stretch reads KSAHQPE. A helical transmembrane segment spans residues 368 to 388; it reads LPWMMLGIIGIFTFLALGWQF. The Cytoplasmic segment spans residues 389–402; that stretch reads SQKRTARRLLERDA.

This sequence belongs to the major facilitator superfamily. DHA1 family. MdtH (TC 2.A.1.2.21) subfamily.

It localises to the cell inner membrane. Its function is as follows. Confers resistance to norfloxacin and enoxacin. This chain is Multidrug resistance protein MdtH, found in Escherichia coli O7:K1 (strain IAI39 / ExPEC).